The primary structure comprises 506 residues: MEDLDALLADLQITTPPRCPVLLTDSPEKPQPTETRPPPPPYDPKTAMSNKTSDHETFPVDKDHLYSTVQKYPLPSVSPALGGGLCELDRLLNELNATQFNITDEIMSQFPTRDPSEQKAEAQKEAEKRALSASSATLELDRLMASLSDFHKQNTVSQEVEAPGAYKGSEEVSRPGDTEDLSSPRSTACVPKDLEDAPTPKSFKVVSAPGHLEVKTNQVNSDEVTASRVPDSVSGSKVPEATSVPRSDLDSMLVKLQSGLKQQGIETYSKGLCESCQRPIAGQVVTALGHTWHPEHFVCAHCHTLIGTSNFFEKDGRPYCEKDYFMLYAPRCALCELPIVQNMVTALGCTWHPEHFCCKVCKKPIGEEGFHEKDGEQYCSDDYFRLFGAVCAGCTEAVKESYISALGGLWHPQCFVCHVCHTPFINGSFFEHEGLPLCETHYHSRRGSLCAGCEQPITGRCVTAMGKKFHPQHLNCTFCLRQLNKGTFREHDEKPYCQACYARLYG.

An LD motif 1 motif is present at residues 3–15; sequence DLDALLADLQITT. The segment at 15-62 is disordered; that stretch reads TPPRCPVLLTDSPEKPQPTETRPPPPPYDPKTAMSNKTSDHETFPVDK. A compositionally biased stretch (basic and acidic residues) spans 52 to 62; that stretch reads TSDHETFPVDK. 2 consecutive short sequence motifs (LD motif) follow at residues 87–99 and 139–150; these read ELDR…NATQ and ELDRLMASLSDF. Disordered stretches follow at residues 154 to 201 and 221 to 244; these read NTVS…PTPK and SDEV…ATSV. The span at 168-177 shows a compositional bias: basic and acidic residues; it reads GSEEVSRPGD. Residues 248-260 carry the LD motif 4 motif; that stretch reads DLDSMLVKLQSGL. LIM zinc-binding domains are found at residues 271 to 330, 331 to 388, 389 to 448, and 449 to 506; these read GLCE…LYAP, RCAL…RLFG, AVCA…RRGS, and LCAG…RLYG.

This sequence belongs to the paxillin family. As to quaternary structure, interacts with tcf3 and tcf7l2.

Its subcellular location is the cell junction. It is found in the focal adhesion. The protein resides in the nucleus matrix. It localises to the cytoplasm. The protein localises to the cytoskeleton. Functions as a molecular adapter coordinating multiple protein-protein interactions at the focal adhesion complex and in the nucleus. May regulate both Wnt and steroid signaling pathways and play a role in the processes of cell growth, proliferation, migration, differentiation and senescence. May have a zinc-dependent DNA-binding activity. This chain is Transforming growth factor beta-1-induced transcript 1 protein (tgfb1i1), found in Xenopus laevis (African clawed frog).